The chain runs to 359 residues: 4-hydroxy-tetrahydrodipicolinate synthase, chloroplastic (359 aa).

The transit peptide at 1–33 directs the protein to the chloroplast; that stretch reads MSSSIIGRCHFVADSIEAAGTKRRTTRWRSPRA. Residue Thr-102 participates in pyruvate binding. Catalysis depends on Tyr-188, which acts as the Proton donor/acceptor. Lys-216 serves as the catalytic Schiff-base intermediate with substrate. A pyruvate-binding site is contributed by Ile-255.

This sequence belongs to the DapA family.

Its subcellular location is the plastid. It is found in the chloroplast. It carries out the reaction L-aspartate 4-semialdehyde + pyruvate = (2S,4S)-4-hydroxy-2,3,4,5-tetrahydrodipicolinate + H2O + H(+). It functions in the pathway amino-acid biosynthesis; L-lysine biosynthesis via DAP pathway; (S)-tetrahydrodipicolinate from L-aspartate: step 3/4. Catalyzes the condensation of (S)-aspartate-beta-semialdehyde [(S)-ASA] and pyruvate to 4-hydroxy-tetrahydrodipicolinate (HTPA). This is 4-hydroxy-tetrahydrodipicolinate synthase, chloroplastic (DHPS1) from Nicotiana tabacum (Common tobacco).